The primary structure comprises 116 residues: Large ribosomal subunit protein bL20c (116 aa).

Belongs to the bacterial ribosomal protein bL20 family.

It localises to the plastid. The protein localises to the chloroplast. Functionally, binds directly to 23S ribosomal RNA and is necessary for the in vitro assembly process of the 50S ribosomal subunit. It is not involved in the protein synthesizing functions of that subunit. The protein is Large ribosomal subunit protein bL20c of Cyanidioschyzon merolae (strain NIES-3377 / 10D) (Unicellular red alga).